Consider the following 318-residue polypeptide: Guanidinopropionase (318 aa).

Mn(2+) is bound by residues His126, Asp148, His150, Asp152, Asp240, and Asp242.

The protein belongs to the arginase family. Agmatinase subfamily. As to quaternary structure, homohexamer. Requires Mn(2+) as cofactor.

It carries out the reaction 3-guanidinopropanoate + H2O = urea + beta-alanine. Catalyzes the hydrolysis of 3-guanidinopropanoate to beta-alanine and urea. Possesses low activity against 4-guanidinobutanoate. Has no activity against arginine and agmatine. This Pseudomonas aeruginosa (strain ATCC 15692 / DSM 22644 / CIP 104116 / JCM 14847 / LMG 12228 / 1C / PRS 101 / PAO1) protein is Guanidinopropionase (gpuA).